Reading from the N-terminus, the 258-residue chain is UPF0246 protein YaaA (258 aa).

The protein belongs to the UPF0246 family.

In Escherichia coli O157:H7, this protein is UPF0246 protein YaaA.